Here is a 356-residue protein sequence, read N- to C-terminus: Gluconolactonase (356 aa).

Residues 1 to 35 (MTTGRMSRRECLSAAVMVPIAAMTATATITGSAQA) constitute a signal peptide (tat-type signal).

In terms of assembly, homodimer. Post-translationally, predicted to be exported by the Tat system. The position of the signal peptide cleavage has been experimentally proven.

Its subcellular location is the periplasm. The catalysed reaction is D-glucono-1,5-lactone + H2O = D-gluconate + H(+). It participates in carbohydrate acid metabolism; D-gluconate biosynthesis; D-gluconate from D-glucono-1,5-lactone: step 1/1. In terms of biological role, hydrolyzes the gluconolactone formed by glucose-fructose oxidoreductase, and that formed in aerobic conditions by the glucose dehydrogenase present. This chain is Gluconolactonase (gnl), found in Zymomonas mobilis subsp. mobilis (strain ATCC 31821 / ZM4 / CP4).